Reading from the N-terminus, the 153-residue chain is Ribosome maturation factor RimP (153 aa).

The protein belongs to the RimP family.

Its subcellular location is the cytoplasm. In terms of biological role, required for maturation of 30S ribosomal subunits. In Clostridium botulinum (strain Okra / Type B1), this protein is Ribosome maturation factor RimP.